Reading from the N-terminus, the 235-residue chain is Proteasome subunit alpha type-2-B (235 aa).

Lys64 participates in a covalent cross-link: Glycyl lysine isopeptide (Lys-Gly) (interchain with G-Cter in ubiquitin).

It belongs to the peptidase T1A family. Component of the 20S core complex of the 26S proteasome. The 26S proteasome is composed of a core protease (CP), known as the 20S proteasome, capped at one or both ends by the 19S regulatory particle (RP/PA700). The 20S proteasome core is composed of 28 subunits that are arranged in four stacked rings, resulting in a barrel-shaped structure. The two end rings are each formed by seven alpha subunits, and the two central rings are each formed by seven beta subunits. The catalytic chamber with the active sites is on the inside of the barrel.

It is found in the cytoplasm. It localises to the nucleus. In terms of biological role, the proteasome is a multicatalytic proteinase complex which is characterized by its ability to cleave peptides with Arg, Phe, Tyr, Leu, and Glu adjacent to the leaving group at neutral or slightly basic pH. The proteasome has an ATP-dependent proteolytic activity. This is Proteasome subunit alpha type-2-B (PAB2) from Arabidopsis thaliana (Mouse-ear cress).